The following is a 201-amino-acid chain: Putative lipoprotein Hmuk_2215 (201 aa).

Residues 1 to 22 (MCPRPRRAVLLGLGVAMSAIAG) form the signal peptide. Cysteine 23 is modified (N-acetylcysteine). Cysteine 23 carries the S-archaeol cysteine lipid modification. Disordered regions lie at residues 25–78 (ETAP…ETSE) and 182–201 (ATRA…GDCP). The segment covering 69-78 (TRADETETSE) has biased composition (basic and acidic residues).

It localises to the cell membrane. The sequence is that of Putative lipoprotein Hmuk_2215 from Halomicrobium mukohataei (strain ATCC 700874 / DSM 12286 / JCM 9738 / NCIMB 13541) (Haloarcula mukohataei).